Reading from the N-terminus, the 182-residue chain is ATP synthase subunit b 1 (182 aa).

A helical transmembrane segment spans residues 24–44; it reads FADPAFWVSIAFLMVVGFVYI.

This sequence belongs to the ATPase B chain family. F-type ATPases have 2 components, F(1) - the catalytic core - and F(0) - the membrane proton channel. F(1) has five subunits: alpha(3), beta(3), gamma(1), delta(1), epsilon(1). F(0) has three main subunits: a(1), b(2) and c(10-14). The alpha and beta chains form an alternating ring which encloses part of the gamma chain. F(1) is attached to F(0) by a central stalk formed by the gamma and epsilon chains, while a peripheral stalk is formed by the delta and b chains.

It localises to the cell inner membrane. In terms of biological role, f(1)F(0) ATP synthase produces ATP from ADP in the presence of a proton or sodium gradient. F-type ATPases consist of two structural domains, F(1) containing the extramembraneous catalytic core and F(0) containing the membrane proton channel, linked together by a central stalk and a peripheral stalk. During catalysis, ATP synthesis in the catalytic domain of F(1) is coupled via a rotary mechanism of the central stalk subunits to proton translocation. Component of the F(0) channel, it forms part of the peripheral stalk, linking F(1) to F(0). The chain is ATP synthase subunit b 1 from Rhodospirillum rubrum (strain ATCC 11170 / ATH 1.1.1 / DSM 467 / LMG 4362 / NCIMB 8255 / S1).